The following is a 244-amino-acid chain: uncharacterized protein (244 aa).

The segment at 30-49 (RETNESPKSQNPSEEATTVN) is disordered. Residues 35-49 (SPKSQNPSEEATTVN) show a composition bias toward polar residues. Transmembrane regions (helical) follow at residues 96–116 (LWGT…LSNS), 128–148 (LLFI…FGLF), 171–191 (GFFI…TIAF), and 194–214 (FVTI…HPLS). The tract at residues 224 to 244 (QLDGSGERKTDSSLVHQNPPN) is disordered. Residues 235–244 (SSLVHQNPPN) show a composition bias toward polar residues.

It is found in the nucleus membrane. This is an uncharacterized protein from Schizosaccharomyces pombe (strain 972 / ATCC 24843) (Fission yeast).